A 78-amino-acid polypeptide reads, in one-letter code: Putative defensin-like protein 288 (78 aa).

Positions 1–21 (MSNLRLTIAVFLAALFQTLWW) are cleaved as a signal peptide.

This sequence belongs to the DEFL family.

The protein localises to the secreted. In Arabidopsis thaliana (Mouse-ear cress), this protein is Putative defensin-like protein 288.